We begin with the raw amino-acid sequence, 193 residues long: 7-methyl-GTP pyrophosphatase (193 aa).

Aspartate 70 serves as the catalytic Proton acceptor.

Belongs to the Maf family. YceF subfamily. The cofactor is a divalent metal cation.

It localises to the cytoplasm. It catalyses the reaction N(7)-methyl-GTP + H2O = N(7)-methyl-GMP + diphosphate + H(+). Functionally, nucleoside triphosphate pyrophosphatase that hydrolyzes 7-methyl-GTP (m(7)GTP). May have a dual role in cell division arrest and in preventing the incorporation of modified nucleotides into cellular nucleic acids. The sequence is that of 7-methyl-GTP pyrophosphatase from Vibrio parahaemolyticus serotype O3:K6 (strain RIMD 2210633).